The primary structure comprises 255 residues: 7alpha-hydroxysteroid dehydrogenase (255 aa).

NAD(+) is bound by residues Ile-23, 42 to 43, 68 to 69, and Asn-95; these read DI. 4 residues coordinate glycochenodeoxycholate: Gly-99, Ser-146, Asn-151, and Tyr-159. NAD(+)-binding positions include Tyr-159, Lys-163, and 192–194; that span reads ILT. The active-site Proton acceptor is Tyr-159.

The protein belongs to the short-chain dehydrogenases/reductases (SDR) family. As to quaternary structure, homotetramer.

It catalyses the reaction cholate + NAD(+) = 3alpha,12alpha-dihydroxy-7-oxo-5beta-cholanate + NADH + H(+). The catalysed reaction is chenodeoxycholate + NAD(+) = 7-oxolithocholate + NADH + H(+). It carries out the reaction taurochenodeoxycholate + NAD(+) = 7-oxotaurolithocholate + NADH + H(+). The enzyme catalyses taurocholate + NAD(+) = 7-oxo-taurodeoxycholate + NADH + H(+). It catalyses the reaction glycocholate + NAD(+) = 7-oxo-glycodeoxycholate + NADH + H(+). The catalysed reaction is glycochenodeoxycholate + NAD(+) = 7-oxoglycolithocholate + NADH + H(+). 7alpha-hydroxysteroid dehydrogenase involved in the metabolism of bile acids. Catalyzes the NAD(+)-dependent oxidation of the 7alpha-hydroxy group of 7alpha-hydroxysteroids, such as the major human bile acids cholate and chenodeoxycholate, to the corresponding 7-oxosteroids. To a lesser extent, can also act on taurochenodeoxycholate, taurocholate and glycocholate. Can also use glycochenodeoxycholate as substrate. Is not able to use NADP(+) instead of NAD(+) as the electron acceptor. This Escherichia coli O157:H7 protein is 7alpha-hydroxysteroid dehydrogenase (hdhA).